A 143-amino-acid polypeptide reads, in one-letter code: Cold shock domain-containing protein CG9705 (143 aa).

Residues 1–30 (MTEPRTPEKLLAAKPPVLHHNSHSPNASLQ) form a disordered region. Phosphoserine is present on residues S22, S24, S28, and S33. In terms of domain architecture, CSD spans 54–121 (VVTGMVKSFS…KHQAVHVQIS (68 aa)). Phosphoserine occurs at positions 139 and 140.

In Drosophila melanogaster (Fruit fly), this protein is Cold shock domain-containing protein CG9705.